The chain runs to 1118 residues: Constitutive coactivator of PPAR-gamma-like protein 1 (1118 aa).

The tract at residues Pro339 to Leu405 is interaction with YES1, SRC and FYN. A disordered region spans residues Ala374–Leu533. The segment covering Pro376–Ser396 has biased composition (low complexity). Polar residues-rich tracts occupy residues Leu405–Asn420 and Ser435–His447. Residues Gly481–Lys502 are compositionally biased toward basic and acidic residues. Positions Ala503–Gln514 are enriched in polar residues. Thr655 bears the Phosphothreonine mark. Positions Ala829–Glu1118 are RNA binding. Arg873, Arg884, and Arg886 each carry omega-N-methylarginine. Residues Ala921 to Gly945 are disordered. Residues Gly924–Gly936 are compositionally biased toward polar residues. Lys932 is modified (N6-acetyllysine). Ser960 is subject to Phosphoserine. Omega-N-methylarginine occurs at positions 982 and 986. Phosphoserine is present on Ser1023. Positions Glu1025–Ala1102 are disordered. Positions Glu1026 to Glu1037 are enriched in basic and acidic residues. Residues Ser1038–Glu1051 are compositionally biased toward low complexity. Residues Ser1044, Ser1045, and Ser1048 each carry the phosphoserine modification. A compositionally biased stretch (polar residues) spans His1076 to Ser1101.

The protein belongs to the constitutive coactivator of PPAR-gamma family. In terms of assembly, interacts with PURA. Interacts with SRC family protein kinases YES1, SRC and FYN. Upon tyrosine phosphorylation, interacts with PIK3R1. Interacts with IGF2BP1/IMP-1 in an RNA-dependent manner. Post-translationally, arg-982 is dimethylated, probably to asymmetric dimethylarginine. In terms of processing, phosphorylated on tyrosine by SRC family protein kinases upon oxidative stress, for instance following UV irradiation. Widely expressed. In gastric mucosa, detected in the bottom region of the foveolar epithelium (at protein level).

The protein localises to the cytoplasm. The protein resides in the cell membrane. Functionally, component of the oxidative stress-induced survival signaling. May regulate the activation of SRC family protein kinases. May act as a scaffolding protein enabling SRC family protein kinases to phosphorylate and activate PI3-kinase. Binds IGF2 RNA and promotes the production of IGF2 protein. The chain is Constitutive coactivator of PPAR-gamma-like protein 1 (FAM120A) from Homo sapiens (Human).